Consider the following 695-residue polypeptide: DNA ligase (695 aa).

NAD(+) contacts are provided by residues 39–43 (DAEYD), 88–89 (SL), and E124. Residue K126 is the N6-AMP-lysine intermediate of the active site. The NAD(+) site is built by R147, E183, K299, and K323. Residues C419, C422, C437, and C443 each contribute to the Zn(2+) site. A BRCT domain is found at 612-695 (PAQGHLSGKT…ELAGIGPVGP (84 aa)).

The protein belongs to the NAD-dependent DNA ligase family. LigA subfamily. The cofactor is Mg(2+). It depends on Mn(2+) as a cofactor.

It catalyses the reaction NAD(+) + (deoxyribonucleotide)n-3'-hydroxyl + 5'-phospho-(deoxyribonucleotide)m = (deoxyribonucleotide)n+m + AMP + beta-nicotinamide D-nucleotide.. Functionally, DNA ligase that catalyzes the formation of phosphodiester linkages between 5'-phosphoryl and 3'-hydroxyl groups in double-stranded DNA using NAD as a coenzyme and as the energy source for the reaction. It is essential for DNA replication and repair of damaged DNA. This Gluconacetobacter diazotrophicus (strain ATCC 49037 / DSM 5601 / CCUG 37298 / CIP 103539 / LMG 7603 / PAl5) protein is DNA ligase.